The following is a 341-amino-acid chain: L-threonine 3-dehydrogenase (341 aa).

Cys-38 is a binding site for Zn(2+). Catalysis depends on charge relay system residues Thr-40 and His-43. Positions 63, 64, 93, 96, 99, and 107 each coordinate Zn(2+). Residues Ile-175, Asp-195, Arg-200, Leu-262–Ile-264, and Ile-286–Tyr-287 contribute to the NAD(+) site.

It belongs to the zinc-containing alcohol dehydrogenase family. In terms of assembly, homotetramer. It depends on Zn(2+) as a cofactor.

The protein localises to the cytoplasm. It carries out the reaction L-threonine + NAD(+) = (2S)-2-amino-3-oxobutanoate + NADH + H(+). Its pathway is amino-acid degradation; L-threonine degradation via oxydo-reductase pathway; glycine from L-threonine: step 1/2. Functionally, catalyzes the NAD(+)-dependent oxidation of L-threonine to 2-amino-3-ketobutyrate. The protein is L-threonine 3-dehydrogenase of Escherichia fergusonii (strain ATCC 35469 / DSM 13698 / CCUG 18766 / IAM 14443 / JCM 21226 / LMG 7866 / NBRC 102419 / NCTC 12128 / CDC 0568-73).